The primary structure comprises 320 residues: Elongation factor Ts (320 aa).

The segment at 82-85 is involved in Mg(2+) ion dislocation from EF-Tu; it reads TDFV.

This sequence belongs to the EF-Ts family.

Its subcellular location is the cytoplasm. Functionally, associates with the EF-Tu.GDP complex and induces the exchange of GDP to GTP. It remains bound to the aminoacyl-tRNA.EF-Tu.GTP complex up to the GTP hydrolysis stage on the ribosome. The protein is Elongation factor Ts of Flavobacterium johnsoniae (strain ATCC 17061 / DSM 2064 / JCM 8514 / BCRC 14874 / CCUG 350202 / NBRC 14942 / NCIMB 11054 / UW101) (Cytophaga johnsonae).